The primary structure comprises 126 residues: Large-conductance mechanosensitive channel (126 aa).

2 consecutive transmembrane segments (helical) span residues 14-34 (VLDL…VKSL) and 69-89 (GAFL…FLLV).

Belongs to the MscL family. As to quaternary structure, homopentamer.

The protein localises to the cell membrane. In terms of biological role, channel that opens in response to stretch forces in the membrane lipid bilayer. May participate in the regulation of osmotic pressure changes within the cell. In Leuconostoc citreum (strain KM20), this protein is Large-conductance mechanosensitive channel.